Consider the following 346-residue polypeptide: UDP-3-O-acylglucosamine N-acyltransferase (346 aa).

Residue His240 is the Proton acceptor of the active site.

Belongs to the transferase hexapeptide repeat family. LpxD subfamily. Homotrimer.

It catalyses the reaction a UDP-3-O-[(3R)-3-hydroxyacyl]-alpha-D-glucosamine + a (3R)-hydroxyacyl-[ACP] = a UDP-2-N,3-O-bis[(3R)-3-hydroxyacyl]-alpha-D-glucosamine + holo-[ACP] + H(+). The protein operates within bacterial outer membrane biogenesis; LPS lipid A biosynthesis. In terms of biological role, catalyzes the N-acylation of UDP-3-O-acylglucosamine using 3-hydroxyacyl-ACP as the acyl donor. Is involved in the biosynthesis of lipid A, a phosphorylated glycolipid that anchors the lipopolysaccharide to the outer membrane of the cell. This Bacteroides thetaiotaomicron (strain ATCC 29148 / DSM 2079 / JCM 5827 / CCUG 10774 / NCTC 10582 / VPI-5482 / E50) protein is UDP-3-O-acylglucosamine N-acyltransferase.